Consider the following 245-residue polypeptide: Probable transcriptional regulatory protein pc1328 (245 aa).

The protein belongs to the TACO1 family.

The protein resides in the cytoplasm. The sequence is that of Probable transcriptional regulatory protein pc1328 from Protochlamydia amoebophila (strain UWE25).